A 155-amino-acid polypeptide reads, in one-letter code: RNA pyrophosphohydrolase (155 aa).

Residues 5–147 enclose the Nudix hydrolase domain; sequence RYRPNVAAIV…KRPVYKKVLE (143 aa). Positions 42–63 match the Nudix box motif; that stretch reads GGIDKGESPKEALLRELKEEIG.

This sequence belongs to the Nudix hydrolase family. RppH subfamily. A divalent metal cation serves as cofactor.

Functionally, accelerates the degradation of transcripts by removing pyrophosphate from the 5'-end of triphosphorylated RNA, leading to a more labile monophosphorylated state that can stimulate subsequent ribonuclease cleavage. This is RNA pyrophosphohydrolase from Nitratiruptor sp. (strain SB155-2).